A 1692-amino-acid chain; its full sequence is Fatty acid synthase alpha subunit hexA (1692 aa).

The disordered stretch occupies residues 44 to 80; it reads AVEEPVDETPAPETAPERPPLSRAKTAAVKPQETAAP. Residues 90–174 form the Carrier domain; the sequence is LSAEEIVRAL…RVSSALLSKL (85 aa). An O-(pantetheine 4'-phosphoryl)serine modification is found at Ser-125. The interval 508–746 is ketoreductase (KR) domain; sequence FAGKNILITG…IAMLMTPELV (239 aa). In terms of domain architecture, Ketosynthase family 3 (KS3) spans 948–1430; it reads KEYLHEVAVE…QKGGQVVGVA (483 aa). The For beta-ketoacyl synthase activity role is filled by Cys-1135. Residues 1263 to 1287 form a disordered region; the sequence is GQAQLDKSSPSTNTTSRTSSVSLAR. Residues 1270–1284 show a composition bias toward low complexity; that stretch reads SSPSTNTTSRTSSVS. Active-site for beta-ketoacyl synthase activity residues include His-1315 and His-1356. Asp-1569 contacts Mg(2+). Acetyl-CoA is bound by residues 1569–1571, 1615–1625, 1639–1642, and 1668–1670; these read DLV, EAVFKCLHTQT, KSDN, and ISH. Ser-1669 provides a ligand contact to Mg(2+).

The protein belongs to the thiolase-like superfamily. Fungal fatty acid synthetase subunit alpha family. In terms of assembly, [Alpha(6)beta(6)] hexamers of two multifunctional subunits (alpha and beta). Post-translationally, 4'-phosphopantetheine is transferred from CoA to a specific serine of the acyl carrier domain by the C-terminal PPT domain. This modification is essential for activity because fatty acids are bound in thioester linkage to the sulfhydryl of the prosthetic group.

It catalyses the reaction acetyl-CoA + n malonyl-CoA + 2n NADPH + 4n H(+) = a long-chain-acyl-CoA + n CoA + n CO2 + 2n NADP(+).. The enzyme catalyses a fatty acyl-[ACP] + malonyl-[ACP] + H(+) = a 3-oxoacyl-[ACP] + holo-[ACP] + CO2. It carries out the reaction a (3R)-hydroxyacyl-[ACP] + NADP(+) = a 3-oxoacyl-[ACP] + NADPH + H(+). The protein operates within mycotoxin biosynthesis. Fatty acid synthase alpha subunit; part of the fragmented gene cluster that mediates the biosynthesis of dothistromin (DOTH), a polyketide toxin very similar in structure to the aflatoxin precursor, versicolorin B. The first step of the pathway is the conversion of acetate to norsolorinic acid (NOR) and requires the fatty acid synthase subunits hexA and hexB, as well as the polyketide synthase pksA. PksA combines a hexanoyl starter unit and 7 malonyl-CoA extender units to synthesize the precursor NOR. The hexanoyl starter unit is provided to the acyl-carrier protein (ACP) domain by the fungal fatty acid synthase hexA/hexB. The second step is the conversion of NOR to averantin (AVN) and requires the norsolorinic acid ketoreductase nor1, which catalyzes the dehydration of norsolorinic acid to form (1'S)-averantin. The cytochrome P450 monooxygenase avnA then catalyzes the hydroxylation of AVN to 5'hydroxyaverantin (HAVN). The next step is performed by adhA that transforms HAVN to averufin (AVF). Averufin might then be converted to hydroxyversicolorone by cypX and avfA. Hydroxyversicolorone is further converted versiconal hemiacetal acetate (VHA) by moxY. VHA is then the substrate for the versiconal hemiacetal acetate esterase est1 to yield versiconal (VAL). Versicolorin B synthase vbsA then converts VAL to versicolorin B (VERB) by closing the bisfuran ring. Then, the activity of the versicolorin B desaturase verB leads to versicolorin A (VERA). DotB, a predicted chloroperoxidase, may perform epoxidation of the A-ring of VERA. Alternatively, a cytochrome P450, such as cypX or avnA could catalyze this step. It is also possible that another, uncharacterized, cytochrome P450 enzyme is responsible for this step. Opening of the epoxide could potentially be achieved by the epoxide hydrolase epoA. However, epoA seems not to be required for DOTH biosynthesis, but other epoxide hydrolases may have the ability to complement this hydrolysis. Alternatively, opening of the epoxide ring could be achieved non-enzymatically. The next step is the deoxygenation of ring A to yield the 5,8-dihydroxyanthraquinone which is most likely catalyzed by the NADPH dehydrogenase encoded by ver1. The last stages of DOTH biosynthesis are proposed to involve hydroxylation of the bisfuran. OrdB and norB might have oxidative roles here. An alternative possibility is that cytochrome P450 monoogenases such as avnA and cypX might perform these steps in addition to previously proposed steps. This Dothistroma septosporum (strain NZE10 / CBS 128990) (Red band needle blight fungus) protein is Fatty acid synthase alpha subunit hexA.